The primary structure comprises 234 residues: Probable transcriptional regulatory protein PFL_3960 (234 aa).

This sequence belongs to the TACO1 family.

It localises to the cytoplasm. This is Probable transcriptional regulatory protein PFL_3960 from Pseudomonas fluorescens (strain ATCC BAA-477 / NRRL B-23932 / Pf-5).